The chain runs to 232 residues: MGGSSYDVLRKQARSLENEIDLKLVAFSKIGAGSGGGGSGGLGGVDTSPLLGEHVFDSLSEEIEQMLEKLSSLNESMSDLPASGAAAMHTLQRHREILQGYRQEFNKICANHTMRIEREELLRGSGLATSSGSPSISGLNRREMYLKESGHLNSASHLVNDQINIAIETRDHLHAQRQAFKRLQTRFNDISNRFPLISSLIQRINIKKRRDSLILGAVIGFCVILLLLYAFN.

Residues Met-1–Asp-211 are Cytoplasmic-facing. Coiled-coil stretches lie at residues Tyr-6–Lys-23 and Gly-52–Leu-80. The chain crosses the membrane as a helical; Anchor for type IV membrane protein span at residues Ser-212–Asn-232.

It belongs to the GOSR1 family. In terms of assembly, component of several multiprotein Golgi SNARE complexes.

It is found in the golgi apparatus membrane. Involved in transport from the ER to the Golgi apparatus as well as in intra-Golgi transport. It belongs to a super-family of proteins called t-SNAREs or soluble NSF (N-ethylmaleimide-sensitive factor) attachment protein receptor. This Drosophila melanogaster (Fruit fly) protein is Golgi SNAP receptor complex member 1 (Gos28).